The primary structure comprises 159 residues: Ribosomal RNA large subunit methyltransferase H (159 aa).

S-adenosyl-L-methionine contacts are provided by residues Leu-76, Gly-108, and 127–132 (FSKMTF).

Belongs to the RNA methyltransferase RlmH family. As to quaternary structure, homodimer.

It localises to the cytoplasm. It carries out the reaction pseudouridine(1915) in 23S rRNA + S-adenosyl-L-methionine = N(3)-methylpseudouridine(1915) in 23S rRNA + S-adenosyl-L-homocysteine + H(+). Functionally, specifically methylates the pseudouridine at position 1915 (m3Psi1915) in 23S rRNA. This is Ribosomal RNA large subunit methyltransferase H from Geobacillus thermodenitrificans (strain NG80-2).